The chain runs to 590 residues: Probable metalloendopeptidase G1-type (590 aa).

His-41 is a binding site for Zn(2+). Glu-44 is a catalytic residue. His-45 provides a ligand contact to Zn(2+).

Belongs to the peptidase M44 family. It depends on Zn(2+) as a cofactor.

Seems to be involved in viral proteins maturation by cleavage at Ala-Gly-|-Xaa motifs. This chain is Probable metalloendopeptidase G1-type, found in Homo sapiens (Human).